A 153-amino-acid chain; its full sequence is NADPH-dependent 7-cyano-7-deazaguanine reductase (153 aa).

Cys51 acts as the Thioimide intermediate in catalysis. The Proton donor role is filled by Asp58. Substrate-binding positions include 73–75 (LES) and 92–93 (HE).

Belongs to the GTP cyclohydrolase I family. QueF type 1 subfamily.

Its subcellular location is the cytoplasm. The enzyme catalyses 7-aminomethyl-7-carbaguanine + 2 NADP(+) = 7-cyano-7-deazaguanine + 2 NADPH + 3 H(+). The protein operates within tRNA modification; tRNA-queuosine biosynthesis. Its function is as follows. Catalyzes the NADPH-dependent reduction of 7-cyano-7-deazaguanine (preQ0) to 7-aminomethyl-7-deazaguanine (preQ1). The chain is NADPH-dependent 7-cyano-7-deazaguanine reductase from Bradyrhizobium diazoefficiens (strain JCM 10833 / BCRC 13528 / IAM 13628 / NBRC 14792 / USDA 110).